A 132-amino-acid polypeptide reads, in one-letter code: Small ribosomal subunit protein uS8 (132 aa).

Belongs to the universal ribosomal protein uS8 family. In terms of assembly, part of the 30S ribosomal subunit. Contacts proteins S5 and S12.

Functionally, one of the primary rRNA binding proteins, it binds directly to 16S rRNA central domain where it helps coordinate assembly of the platform of the 30S subunit. The sequence is that of Small ribosomal subunit protein uS8 from Mycolicibacterium vanbaalenii (strain DSM 7251 / JCM 13017 / BCRC 16820 / KCTC 9966 / NRRL B-24157 / PYR-1) (Mycobacterium vanbaalenii).